The sequence spans 168 residues: Crossover junction endodeoxyribonuclease RuvC (168 aa).

Residues D9, E69, and D141 contribute to the active site. D9, E69, and D141 together coordinate Mg(2+).

This sequence belongs to the RuvC family. In terms of assembly, homodimer which binds Holliday junction (HJ) DNA. The HJ becomes 2-fold symmetrical on binding to RuvC with unstacked arms; it has a different conformation from HJ DNA in complex with RuvA. In the full resolvosome a probable DNA-RuvA(4)-RuvB(12)-RuvC(2) complex forms which resolves the HJ. Requires Mg(2+) as cofactor.

The protein resides in the cytoplasm. It carries out the reaction Endonucleolytic cleavage at a junction such as a reciprocal single-stranded crossover between two homologous DNA duplexes (Holliday junction).. Its function is as follows. The RuvA-RuvB-RuvC complex processes Holliday junction (HJ) DNA during genetic recombination and DNA repair. Endonuclease that resolves HJ intermediates. Cleaves cruciform DNA by making single-stranded nicks across the HJ at symmetrical positions within the homologous arms, yielding a 5'-phosphate and a 3'-hydroxyl group; requires a central core of homology in the junction. The consensus cleavage sequence is 5'-(A/T)TT(C/G)-3'. Cleavage occurs on the 3'-side of the TT dinucleotide at the point of strand exchange. HJ branch migration catalyzed by RuvA-RuvB allows RuvC to scan DNA until it finds its consensus sequence, where it cleaves and resolves the cruciform DNA. The polypeptide is Crossover junction endodeoxyribonuclease RuvC (Bdellovibrio bacteriovorus (strain ATCC 15356 / DSM 50701 / NCIMB 9529 / HD100)).